Reading from the N-terminus, the 301-residue chain is Sulfate adenylyltransferase subunit 2 (301 aa).

Belongs to the PAPS reductase family. CysD subfamily. Heterodimer composed of CysD, the smaller subunit, and CysN.

It catalyses the reaction sulfate + ATP + H(+) = adenosine 5'-phosphosulfate + diphosphate. It functions in the pathway sulfur metabolism; hydrogen sulfide biosynthesis; sulfite from sulfate: step 1/3. In terms of biological role, with CysN forms the ATP sulfurylase (ATPS) that catalyzes the adenylation of sulfate producing adenosine 5'-phosphosulfate (APS) and diphosphate, the first enzymatic step in sulfur assimilation pathway. APS synthesis involves the formation of a high-energy phosphoric-sulfuric acid anhydride bond driven by GTP hydrolysis by CysN coupled to ATP hydrolysis by CysD. This chain is Sulfate adenylyltransferase subunit 2, found in Citrifermentans bemidjiense (strain ATCC BAA-1014 / DSM 16622 / JCM 12645 / Bem) (Geobacter bemidjiensis).